The following is a 403-amino-acid chain: Prostaglandin D2 receptor 2 (403 aa).

Over M1–S34 the chain is Extracellular. 3 N-linked (GlcNAc...) asparagine glycosylation sites follow: N3, N21, and N24. The chain crosses the membrane as a helical span at residues V35–V55. Residues V56–H71 lie on the Cytoplasmic side of the membrane. Residues L72–V92 traverse the membrane as a helical segment. The Extracellular segment spans residues G93–K104. An intrachain disulfide couples C103 to C198. Residues L105–S125 traverse the membrane as a helical segment. Residues L126–A147 are Cytoplasmic-facing. Residues H148–F168 form a helical membrane-spanning segment. The Extracellular portion of the chain corresponds to R169 to K209. A helical transmembrane segment spans residues F210–L230. Topologically, residues Q231–R245 are cytoplasmic. The chain crosses the membrane as a helical span at residues L246 to L266. The Extracellular segment spans residues L267–G284. A helical transmembrane segment spans residues L285 to L305. The Cytoplasmic segment spans residues T306–D403. Residues D329–L332 carry the Involved in the recycling of CRTH2 motif. S330 bears the Phosphoserine mark. Disordered regions lie at residues L332–T353 and P384–D403. The segment covering K338–A348 has biased composition (basic residues). S349 carries the post-translational modification Phosphoserine. Over residues E393–D403 the composition is skewed to polar residues.

The protein belongs to the G-protein coupled receptor 1 family. In terms of processing, phosphorylated.

Its subcellular location is the cell membrane. In terms of biological role, receptor for prostaglandin D2 (PGD2). Coupled to the G(i)-protein. Receptor activation may result in pertussis toxin-sensitive decreases in cAMP levels and Ca(2+) mobilization. PI3K signaling is also implicated in mediating PTGDR2 effects. PGD2 induced receptor internalization. CRTH2 internalization can be regulated by diverse kinases such as, PKC, PKA, GRK2, GPRK5/GRK5 and GRK6. Receptor activation is responsible, at least in part, in immune regulation and allergic/inflammation responses. The polypeptide is Prostaglandin D2 receptor 2 (Ptgdr2) (Rattus norvegicus (Rat)).